The chain runs to 488 residues: Catalase (488 aa).

Residues 1 to 26 (MTDRKNLTTNQGVPVGDNQNSMTAGR) are disordered. Over residues 7–23 (LTTNQGVPVGDNQNSMT) the composition is skewed to polar residues. Active-site residues include H55 and N128. Y338 lines the heme pocket.

It belongs to the catalase family. Heme serves as cofactor.

The protein resides in the cytoplasm. It catalyses the reaction 2 H2O2 = O2 + 2 H2O. Decomposes hydrogen peroxide into water and oxygen; serves to protect cells from the toxic effects of hydrogen peroxide. This is Catalase (kat) from Listeria monocytogenes serovar 1/2a (strain ATCC BAA-679 / EGD-e).